Consider the following 180-residue polypeptide: MSRIGKKPIPIPDKVTVTLNGANVAVKGPKGSLERTLPEKVTVTQEDNTIVVSPVDNSRTARERHGLCRTLVANMIEGVSQGYSKQLEIIGVGYRAQVQGNKLTLNVGYSKPVEMQMPEGVTAAMGEKNTQVIISGIDKEVVGNTAAKVRAVRPPEPYKGKGIRYQGEYIRRKAGKAGKK.

The protein belongs to the universal ribosomal protein uL6 family. In terms of assembly, part of the 50S ribosomal subunit.

Its function is as follows. This protein binds to the 23S rRNA, and is important in its secondary structure. It is located near the subunit interface in the base of the L7/L12 stalk, and near the tRNA binding site of the peptidyltransferase center. This Picosynechococcus sp. (strain ATCC 27264 / PCC 7002 / PR-6) (Agmenellum quadruplicatum) protein is Large ribosomal subunit protein uL6.